Reading from the N-terminus, the 554-residue chain is 3-(3-hydroxy-phenyl)propionate/3-hydroxycinnamic acid hydroxylase (554 aa).

Residues 17–46 (QVAI…VVEK) and 285–295 (FRIDRVLLAGD) each bind FAD.

Belongs to the PheA/TfdB FAD monooxygenase family. Requires FAD as cofactor.

It catalyses the reaction 3-(3-hydroxyphenyl)propanoate + NADH + O2 + H(+) = 3-(2,3-dihydroxyphenyl)propanoate + NAD(+) + H2O. The catalysed reaction is (2E)-3-(3-hydroxyphenyl)prop-2-enoate + NADH + O2 + H(+) = (2E)-3-(2,3-dihydroxyphenyl)prop-2-enoate + NAD(+) + H2O. It participates in aromatic compound metabolism; 3-phenylpropanoate degradation. Functionally, catalyzes the insertion of one atom of molecular oxygen into position 2 of the phenyl ring of 3-(3-hydroxyphenyl)propionate (3-HPP) and hydroxycinnamic acid (3HCI). The sequence is that of 3-(3-hydroxy-phenyl)propionate/3-hydroxycinnamic acid hydroxylase from Shigella sonnei (strain Ss046).